The following is a 283-amino-acid chain: Thymidylate synthase (283 aa).

R22 contacts dUMP. The Nucleophile role is filled by C160. Residues 180–183 (RSCD), N191, and 221–223 (HIY) contribute to the dUMP site. D183 provides a ligand contact to (6R)-5,10-methylene-5,6,7,8-tetrahydrofolate. (6R)-5,10-methylene-5,6,7,8-tetrahydrofolate is bound at residue S282.

It belongs to the thymidylate synthase family. Bacterial-type ThyA subfamily. Homodimer.

It localises to the cytoplasm. It catalyses the reaction dUMP + (6R)-5,10-methylene-5,6,7,8-tetrahydrofolate = 7,8-dihydrofolate + dTMP. It functions in the pathway pyrimidine metabolism; dTTP biosynthesis. Its function is as follows. Catalyzes the reductive methylation of 2'-deoxyuridine-5'-monophosphate (dUMP) to 2'-deoxythymidine-5'-monophosphate (dTMP) while utilizing 5,10-methylenetetrahydrofolate (mTHF) as the methyl donor and reductant in the reaction, yielding dihydrofolate (DHF) as a by-product. This enzymatic reaction provides an intracellular de novo source of dTMP, an essential precursor for DNA biosynthesis. This chain is Thymidylate synthase, found in Shewanella loihica (strain ATCC BAA-1088 / PV-4).